We begin with the raw amino-acid sequence, 87 residues long: Large ribosomal subunit protein bL27 (87 aa).

Positions 1-22 (MAHKKGQGSVKNGRDSRSKRLG) are disordered.

It belongs to the bacterial ribosomal protein bL27 family.

This is Large ribosomal subunit protein bL27 from Akkermansia muciniphila (strain ATCC BAA-835 / DSM 22959 / JCM 33894 / BCRC 81048 / CCUG 64013 / CIP 107961 / Muc).